A 387-amino-acid chain; its full sequence is Putative F-box protein At1g47800 (387 aa).

The F-box domain occupies 8–54 (LQSLDHIPIDVLFEILVKLPAKSVARFLCVSKVWATMIRGEVFIRSF).

This chain is Putative F-box protein At1g47800, found in Arabidopsis thaliana (Mouse-ear cress).